The sequence spans 425 residues: Histone-binding protein RBBP7 (425 aa).

7 WD repeats span residues 47-122 (QWLP…KINH), 128-173 (RARY…LRLR), 181-217 (GLSW…KVVD), 228-269 (VVED…HSVD), 275-312 (VNCL…LHSF), 318-369 (EIFQ…LFIH), and 376-403 (ISDF…IWQM).

This sequence belongs to the WD repeat RBAP46/RBAP48/MSI1 family. In terms of assembly, binds directly to helix 1 of the histone fold of histone H4, a region that is not accessible when H4 is in chromatin.

Its subcellular location is the nucleus. In terms of biological role, core histone-binding subunit that may target chromatin remodeling factors, histone acetyltransferases and histone deacetylases to their histone substrates in a manner that is regulated by nucleosomal DNA. Component of several complexes which regulate chromatin metabolism. The protein is Histone-binding protein RBBP7 (rbbp7) of Xenopus laevis (African clawed frog).